The sequence spans 557 residues: Probable tRNA-splicing endonuclease subunit tsp-5 (557 aa).

5 disordered regions span residues 1–36 (MPLDDDLEDNPSLVPPPSTTTTSSNATGDAATMMDE), 131–152 (KLTKRGKEGAGEDDEEEKDRKL), 225–252 (SVPAAAAATTSAKGEGEQRTEEDEEDDD), 370–403 (PSSTSSSASPTADNQPQKPQSPESDESDSGSDSP), and 514–557 (SGGP…GRGN). Over residues 131–140 (KLTKRGKEGA) the composition is skewed to basic and acidic residues. A compositionally biased stretch (low complexity) spans 370–381 (PSSTSSSASPTA). 2 stretches are compositionally biased toward gly residues: residues 517–527 (PRRGGGGGGKK) and 538–549 (GRGGGRGGGRGG).

This sequence belongs to the SEN54 family. TRNA splicing endonuclease is a heterotetramer composed of tsp-2/sen2, tsp-1/sen15, tsp-4/sen34 and tsp-5/sen54. Interacts directly with tsp-2/sen2.

Non-catalytic subunit of the tRNA-splicing endonuclease complex, a complex responsible for identification and cleavage of the splice sites in pre-tRNA. It cleaves pre-tRNA at the 5' and 3' splice sites to release the intron. The products are an intron and two tRNA half-molecules bearing 2',3' cyclic phosphate and 5'-OH termini. There are no conserved sequences at the splice sites, but the intron is invariably located at the same site in the gene, placing the splice sites an invariant distance from the constant structural features of the tRNA body. May be required to embody the molecular ruler of the complex. In Neurospora crassa (strain ATCC 24698 / 74-OR23-1A / CBS 708.71 / DSM 1257 / FGSC 987), this protein is Probable tRNA-splicing endonuclease subunit tsp-5 (tsp-5).